We begin with the raw amino-acid sequence, 58 residues long: Large ribosomal subunit protein bL32 (58 aa).

It belongs to the bacterial ribosomal protein bL32 family.

In Staphylococcus aureus (strain NCTC 8325 / PS 47), this protein is Large ribosomal subunit protein bL32.